A 385-amino-acid chain; its full sequence is GDP-D-glucose phosphorylase 1 (385 aa).

Residue His218 is the Tele-GMP-histidine intermediate of the active site.

It belongs to the GDPGP1 family.

It is found in the cytoplasm. It carries out the reaction GDP-alpha-D-glucose + phosphate = alpha-D-glucose 1-phosphate + GDP + H(+). Functionally, specific and highly efficient GDP-D-glucose phosphorylase regulating the levels of GDP-D-glucose in cells. This chain is GDP-D-glucose phosphorylase 1 (GDPGP1), found in Bos taurus (Bovine).